The primary structure comprises 176 residues: Ferritin, liver middle subunit (176 aa).

A Ferritin-like diiron domain is found at 7-156 (QNYHRDCEAA…DFITNLSRMD (150 aa)). Fe cation-binding residues include glutamate 24, glutamate 59, histidine 62, glutamate 104, and glutamine 138.

The protein belongs to the ferritin family. In liver, forms a heteromer consisting of middle and heavy subunits. The functional molecule forms a roughly spherical shell with a diameter of 12 nm and contains a central cavity into which the insoluble mineral iron core is deposited. Liver (at protein level).

The catalysed reaction is 4 Fe(2+) + O2 + 4 H(+) = 4 Fe(3+) + 2 H2O. Stores iron in a soluble, non-toxic, readily available form. Important for iron homeostasis. Has ferroxidase activity. Iron is taken up in the ferrous form and deposited as ferric hydroxides after oxidation. This is Ferritin, liver middle subunit from Trematomus bernacchii (Emerald rockcod).